Consider the following 426-residue polypeptide: Serine--tRNA ligase (426 aa).

231–233 (TAE) lines the L-serine pocket. ATP contacts are provided by residues 262 to 264 (RRE) and Val278. An L-serine-binding site is contributed by Glu285. 349-352 (EVSS) is a binding site for ATP. Ser384 is a binding site for L-serine.

Belongs to the class-II aminoacyl-tRNA synthetase family. Type-1 seryl-tRNA synthetase subfamily. Homodimer. The tRNA molecule binds across the dimer.

Its subcellular location is the cytoplasm. The enzyme catalyses tRNA(Ser) + L-serine + ATP = L-seryl-tRNA(Ser) + AMP + diphosphate + H(+). The catalysed reaction is tRNA(Sec) + L-serine + ATP = L-seryl-tRNA(Sec) + AMP + diphosphate + H(+). It functions in the pathway aminoacyl-tRNA biosynthesis; selenocysteinyl-tRNA(Sec) biosynthesis; L-seryl-tRNA(Sec) from L-serine and tRNA(Sec): step 1/1. Its function is as follows. Catalyzes the attachment of serine to tRNA(Ser). Is also able to aminoacylate tRNA(Sec) with serine, to form the misacylated tRNA L-seryl-tRNA(Sec), which will be further converted into selenocysteinyl-tRNA(Sec). The chain is Serine--tRNA ligase from Chlamydia caviae (strain ATCC VR-813 / DSM 19441 / 03DC25 / GPIC) (Chlamydophila caviae).